The sequence spans 220 residues: Membrane steroid-binding protein 1 (220 aa).

Residues 22–42 (VVFFTALALAFAIYQVISGWF) traverse the membrane as a helical segment. A Cytochrome b5 heme-binding domain is found at 74 to 171 (EITEEELKQY…SKYAKVGTVK (98 aa)). The steroid-binding stretch occupies residues 74-171 (EITEEELKQY…SKYAKVGTVK (98 aa)). The segment at 174-220 (GSEPETASVSEPTENVEQDAHVTTTPGKTVVDKSDDAPAETVLKKEE) is disordered. Residues 178–200 (ETASVSEPTENVEQDAHVTTTPG) are compositionally biased toward polar residues. A compositionally biased stretch (basic and acidic residues) spans 203–220 (VVDKSDDAPAETVLKKEE).

It belongs to the cytochrome b5 family. MAPR subfamily. In terms of assembly, interacts with BAK1 (via extracellular region). In terms of tissue distribution, expressed in cotyledons, stems, roots, leaves, flower and silique stalks, pistils and stigmas, but not in anthers.

The protein localises to the cell membrane. Its subcellular location is the endosome membrane. Functionally, MSBP1 can bind to multiple steroid compounds with different affinities. Negatively regulates cell elongation and brassinosteroid signaling. May act as a coreceptor with BAK1 and enhances its endocytosis. The chain is Membrane steroid-binding protein 1 (MSBP1) from Arabidopsis thaliana (Mouse-ear cress).